A 381-amino-acid polypeptide reads, in one-letter code: MTAPLNPSAPITVEVALGDRGYDIVIGRGGIESLGRRITALRPGARTAIVTDRSVAKHWLPRAQASLDETGIAHSTIVVEEGEVSKSYAGLQQVCEALIEAKIERNDLVIALGGGVVGDLAGFASSIVRRGLDFVQVPTSLLAQVDSSVGGKTGINSPHGKNLVGAFHQPVLVIADTAVLDTLSPRQFRAGYAEVVKYGALGDSGFFAWLEANHAEIVRGGAAREHAIATSCRAKAGVVARDERETGERALLNLGHTFGHALEAATGFSDRLFHGEGVAIGMVLAAEFSAERGMMPAQDATRLSHHLTAAGLPTRMQDIAGFKQEGLADADSLMALMAQDKKVKRGRLTFILMEAIGRAVIANDVEPAPVRDFLHRKLAES.

Residues 81 to 86, 115 to 119, 139 to 140, K152, and K161 contribute to the NAD(+) site; these read EGEVSK, GVVGD, and TS. Zn(2+) is bound by residues E194, H256, and H274.

The protein belongs to the sugar phosphate cyclases superfamily. Dehydroquinate synthase family. Co(2+) serves as cofactor. Zn(2+) is required as a cofactor. The cofactor is NAD(+).

Its subcellular location is the cytoplasm. The enzyme catalyses 7-phospho-2-dehydro-3-deoxy-D-arabino-heptonate = 3-dehydroquinate + phosphate. It participates in metabolic intermediate biosynthesis; chorismate biosynthesis; chorismate from D-erythrose 4-phosphate and phosphoenolpyruvate: step 2/7. In terms of biological role, catalyzes the conversion of 3-deoxy-D-arabino-heptulosonate 7-phosphate (DAHP) to dehydroquinate (DHQ). The polypeptide is 3-dehydroquinate synthase (Rhodopseudomonas palustris (strain BisA53)).